A 305-amino-acid polypeptide reads, in one-letter code: Elongation factor Ts, mitochondrial (305 aa).

This sequence belongs to the EF-Ts family.

It is found in the mitochondrion. In terms of biological role, associates with the EF-Tu.GDP complex and induces the exchange of GDP to GTP. It remains bound to the aminoacyl-tRNA.EF-Tu.GTP complex up to the GTP hydrolysis stage on the ribosome. This chain is Elongation factor Ts, mitochondrial (tsfm), found in Danio rerio (Zebrafish).